A 498-amino-acid chain; its full sequence is Glycerol kinase (498 aa).

An ADP-binding site is contributed by T14. 3 residues coordinate ATP: T14, T15, and S16. T14 contributes to the sn-glycerol 3-phosphate binding site. R18 contributes to the ADP binding site. 3 residues coordinate sn-glycerol 3-phosphate: R84, E85, and Y136. Glycerol-binding residues include R84, E85, and Y136. H232 is modified (phosphohistidine; by HPr). D246 provides a ligand contact to sn-glycerol 3-phosphate. Residues D246 and Q247 each coordinate glycerol. Positions 268 and 311 each coordinate ADP. Residues T268, G311, Q315, and G412 each coordinate ATP. ADP contacts are provided by G412 and N416.

Belongs to the FGGY kinase family. In terms of assembly, homotetramer and homodimer (in equilibrium). In terms of processing, the phosphoenolpyruvate-dependent sugar phosphotransferase system (PTS), including enzyme I, and histidine-containing protein (HPr) are required for the phosphorylation, which leads to the activation of the enzyme.

The enzyme catalyses glycerol + ATP = sn-glycerol 3-phosphate + ADP + H(+). It functions in the pathway polyol metabolism; glycerol degradation via glycerol kinase pathway; sn-glycerol 3-phosphate from glycerol: step 1/1. With respect to regulation, activated by phosphorylation and inhibited by fructose 1,6-bisphosphate (FBP). In terms of biological role, key enzyme in the regulation of glycerol uptake and metabolism. Catalyzes the phosphorylation of glycerol to yield sn-glycerol 3-phosphate. This Lactococcus lactis subsp. lactis (strain IL1403) (Streptococcus lactis) protein is Glycerol kinase.